We begin with the raw amino-acid sequence, 391 residues long: Adhesion defective protein 1 (391 aa).

Over residues 180–190 (SQSRPPQNQIQ) the composition is skewed to polar residues. 2 disordered regions span residues 180–217 (SQSR…PDSP) and 366–391 (VEGE…RTKV). Positions 201 to 211 (SESVNINSSSS) are enriched in low complexity. Over residues 370–383 (NPNNNPNFYSSDML) the composition is skewed to polar residues.

This sequence belongs to the adn1/SEU family.

It is found in the nucleus. In terms of biological role, probable transcriptional regulator involved in cell adhesion. This Schizosaccharomyces pombe (strain 972 / ATCC 24843) (Fission yeast) protein is Adhesion defective protein 1 (adn1).